Reading from the N-terminus, the 65-residue chain is Large ribosomal subunit protein bL31 (65 aa).

C16, C18, C36, and C39 together coordinate Zn(2+).

The protein belongs to the bacterial ribosomal protein bL31 family. Type A subfamily. As to quaternary structure, part of the 50S ribosomal subunit. Zn(2+) serves as cofactor.

In terms of biological role, binds the 23S rRNA. This is Large ribosomal subunit protein bL31 from Carboxydothermus hydrogenoformans (strain ATCC BAA-161 / DSM 6008 / Z-2901).